We begin with the raw amino-acid sequence, 233 residues long: MDGRLPDKGILKSEALKQYIMETTAYPREHELLKELREATIQRYGNLSEMGVPVDESLFLSMLVKIINAKNTIEIGVFTGYSLFTVALALPEDGRITAIDIDQAGYNLGLEFMKKAGVDHKINFIQSDAVRGLDQLLNGEKQEYDFAFVDADKTNYVYFLEKLLKLVKVGGIIAFDNTLWFGTLIQKENEVPGHMRAYREALLEFNKILARDPRVEIAQISIGDGLTLCRRLI.

Lys8 contributes to the substrate binding site. S-adenosyl-L-methionine-binding positions include Val52, Glu74, 76 to 77, Ser82, Asp100, and Ala129; that span reads GV. Asp150 is a substrate binding site. Asp150 contacts a divalent metal cation. An S-adenosyl-L-methionine-binding site is contributed by Asp152. A divalent metal cation-binding residues include Asp176 and Asn177.

This sequence belongs to the class I-like SAM-binding methyltransferase superfamily. Cation-dependent O-methyltransferase family. CCoAMT subfamily. A divalent metal cation serves as cofactor. In terms of tissue distribution, expressed in inflorescences and flower buds. Not detected in roots, leaves or stems. Located exclusively in the tapetum of developing stamen.

It participates in aromatic compound metabolism; phenylpropanoid biosynthesis. Methyltransferase involved in phenylpropanoid polyamine conjugate biosynthesis. In vivo, methylates only one of the 5-hydroxyferuloyl moieties of N1,N5,N10-tri-(hydroxyferuloyl)-spermidine, while is able in vitro to convert all three 5-hydroxyferuloyl residues to the corresponding sinapoyl moieties and to methylate caffeoyl CoA and tricaffeoyl spermidine. In Arabidopsis thaliana (Mouse-ear cress), this protein is Tapetum-specific methyltransferase 1 (TSM1).